We begin with the raw amino-acid sequence, 544 residues long: Prolyl 4-hydroxylase subunit alpha-3 (544 aa).

A signal peptide spans 1–19; the sequence is MGPAARLAALLAVLAFRAG. Residues 107–131 are a coiled coil; it reads LEASENIRALKDGYERVEQDLPAFE. The stretch at 227–260 is one TPR repeat; sequence EDALDHLAFAYFQAGNVLCALNLSREFLLYSPDN. N-linked (GlcNAc...) asparagine glycosylation occurs at asparagine 248. The region spanning 422–529 is the Fe2OG dioxygenase domain; that stretch reads YAEYLQVVNY…KWVANKWIHE (108 aa). Fe cation contacts are provided by histidine 440 and aspartate 442. Asparagine 482 is a glycosylation site (N-linked (GlcNAc...) asparagine). Residue histidine 510 coordinates Fe cation. Lysine 520 contributes to the 2-oxoglutarate binding site.

The protein belongs to the P4HA family. In terms of assembly, heterotetramer of two alpha-3 chains and two beta chains (the beta chain is the multi-functional PDI). It depends on Fe(2+) as a cofactor. The cofactor is L-ascorbate. N-glycosylation plays no role in the catalytic activity.

The protein resides in the endoplasmic reticulum lumen. The enzyme catalyses L-prolyl-[collagen] + 2-oxoglutarate + O2 = trans-4-hydroxy-L-prolyl-[collagen] + succinate + CO2. Catalyzes the post-translational formation of 4-hydroxyproline in -Xaa-Pro-Gly- sequences in collagens and other proteins. This chain is Prolyl 4-hydroxylase subunit alpha-3 (P4HA3), found in Bos taurus (Bovine).